We begin with the raw amino-acid sequence, 185 residues long: Putative gustatory receptor clone PTE01 (185 aa).

A helical transmembrane segment spans residues M1 to A11. Topologically, residues D12–Q42 are extracellular. Residues M43–Y62 traverse the membrane as a helical segment. Residues D63–G84 are Cytoplasmic-facing. A helical membrane pass occupies residues L85–V105. Over L106–N138 the chain is Extracellular. A helical transmembrane segment spans residues I139 to Y160. At Y161–T182 the chain is on the cytoplasmic side. A helical transmembrane segment spans residues C183 to S185.

It belongs to the G-protein coupled receptor 1 family. Tongue specific.

Its subcellular location is the cell membrane. Functionally, possible taste receptor. In Rattus norvegicus (Rat), this protein is Putative gustatory receptor clone PTE01.